A 1072-amino-acid chain; its full sequence is DNA-directed RNA polymerase subunit beta (1072 aa).

It belongs to the RNA polymerase beta chain family. In plastids the minimal PEP RNA polymerase catalytic core is composed of four subunits: alpha, beta, beta', and beta''. When a (nuclear-encoded) sigma factor is associated with the core the holoenzyme is formed, which can initiate transcription.

It localises to the plastid. The protein resides in the chloroplast. It carries out the reaction RNA(n) + a ribonucleoside 5'-triphosphate = RNA(n+1) + diphosphate. Its function is as follows. DNA-dependent RNA polymerase catalyzes the transcription of DNA into RNA using the four ribonucleoside triphosphates as substrates. The polypeptide is DNA-directed RNA polymerase subunit beta (Capsella bursa-pastoris (Shepherd's purse)).